A 426-amino-acid polypeptide reads, in one-letter code: GTPase HflX (426 aa).

One can recognise a Hflx-type G domain in the interval 198-365; that stretch reads PTVSLVGYTN…ALTERLSGEV (168 aa). GTP contacts are provided by residues 204–211, 229–233, 251–254, 317–320, and 343–345; these read GYTNAGKS, FATLD, DTVG, NKID, and SAQ. Positions 211 and 231 each coordinate Mg(2+).

The protein belongs to the TRAFAC class OBG-HflX-like GTPase superfamily. HflX GTPase family. As to quaternary structure, monomer. Associates with the 50S ribosomal subunit. This interaction occurs in the presence of GTP, GDP, ATP or ADP, but not in their absence. It depends on Mg(2+) as a cofactor.

The protein localises to the cytoplasm. Its activity is regulated as follows. Intrinsic GTPase activity is very slow and can be stimulated by the presence of 50S ribosomal subunits or 70S ribosomes. GTPase activity is inhibited by ATP. In terms of biological role, GTPase that associates with the 50S ribosomal subunit and may have a role during protein synthesis or ribosome biogenesis. In vitro, also exhibits ATPase activity. The sequence is that of GTPase HflX from Escherichia coli (strain K12).